Here is a 323-residue protein sequence, read N- to C-terminus: 8-oxo-dGDP phosphatase NUDT18 (323 aa).

The Nudix hydrolase domain occupies Arg-37–Ala-167. Leu-58 lines the Mg(2+) pocket. The Nudix box motif lies at Gly-76–Gly-97.

This sequence belongs to the Nudix hydrolase family. The cofactor is Mn(2+). Mg(2+) serves as cofactor.

It catalyses the reaction 8-oxo-dGDP + H2O = 8-oxo-dGMP + phosphate + H(+). The catalysed reaction is 8-oxo-dADP + H2O = 8-oxo-dAMP + phosphate + H(+). It carries out the reaction 2-oxo-dADP + H2O = 2-oxo-dAMP + phosphate + H(+). The enzyme catalyses 8-oxo-GDP + H2O = 8-oxo-GMP + phosphate + H(+). Mediates the hydrolysis of oxidized nucleoside diphosphate derivatives. Hydrolyzes 8-oxo-7,8-dihydroguanine (8-oxo-Gua)-containing deoxyribo- and ribonucleoside diphosphates to the monophosphates. Hydrolyzes 8-oxo-dGDP and 8-oxo-GDP with the same efficiencies. Also hydrolyzes 8-OH-dADP and 2-OH-dADP. Exhibited no or minimal hydrolysis activity against 8-oxo-dGTP, 8-oxo-GTP, dGTP, GTP, dGDP and GDP. Probably removes oxidized guanine nucleotides from both the DNA and RNA precursor pools. The polypeptide is 8-oxo-dGDP phosphatase NUDT18 (Mus musculus (Mouse)).